A 209-amino-acid polypeptide reads, in one-letter code: Large ribosomal subunit protein uL3 (209 aa).

The segment at 133–153 (THGNSLSHRVPGSIGQNQTPG) is disordered. An N5-methylglutamine modification is found at glutamine 150.

It belongs to the universal ribosomal protein uL3 family. In terms of assembly, part of the 50S ribosomal subunit. Forms a cluster with proteins L14 and L19. Post-translationally, methylated by PrmB.

Its function is as follows. One of the primary rRNA binding proteins, it binds directly near the 3'-end of the 23S rRNA, where it nucleates assembly of the 50S subunit. In Pectobacterium carotovorum subsp. carotovorum (strain PC1), this protein is Large ribosomal subunit protein uL3.